The primary structure comprises 436 residues: Bifunctional protein GlmU (436 aa).

The pyrophosphorylase stretch occupies residues 1-226 (MNEISIIILA…ETNFMGINDK (226 aa)). Residues 9–12 (LAAG), Lys-23, Gln-75, and 82–83 (GT) each bind UDP-N-acetyl-alpha-D-glucosamine. Asp-105 lines the Mg(2+) pocket. UDP-N-acetyl-alpha-D-glucosamine contacts are provided by Gly-138, Glu-152, Asn-167, and Asn-224. Asn-224 is a Mg(2+) binding site. Positions 227–247 (FALSIAEEIMQNRIKENLMKN) are linker. Residues 248–436 (GVIMSLPDTI…YKFFGKNDEK (189 aa)) are N-acetyltransferase. The UDP-N-acetyl-alpha-D-glucosamine site is built by Arg-311 and Lys-328. His-339 serves as the catalytic Proton acceptor. Residues Tyr-342 and Asn-353 each contribute to the UDP-N-acetyl-alpha-D-glucosamine site. Acetyl-CoA-binding positions include 362–363 (NY), Ser-381, Ala-399, and Arg-416.

The protein in the N-terminal section; belongs to the N-acetylglucosamine-1-phosphate uridyltransferase family. In the C-terminal section; belongs to the transferase hexapeptide repeat family. Homotrimer. Requires Mg(2+) as cofactor.

The protein resides in the cytoplasm. It carries out the reaction alpha-D-glucosamine 1-phosphate + acetyl-CoA = N-acetyl-alpha-D-glucosamine 1-phosphate + CoA + H(+). The enzyme catalyses N-acetyl-alpha-D-glucosamine 1-phosphate + UTP + H(+) = UDP-N-acetyl-alpha-D-glucosamine + diphosphate. It functions in the pathway nucleotide-sugar biosynthesis; UDP-N-acetyl-alpha-D-glucosamine biosynthesis; N-acetyl-alpha-D-glucosamine 1-phosphate from alpha-D-glucosamine 6-phosphate (route II): step 2/2. The protein operates within nucleotide-sugar biosynthesis; UDP-N-acetyl-alpha-D-glucosamine biosynthesis; UDP-N-acetyl-alpha-D-glucosamine from N-acetyl-alpha-D-glucosamine 1-phosphate: step 1/1. It participates in bacterial outer membrane biogenesis; LPS lipid A biosynthesis. Its function is as follows. Catalyzes the last two sequential reactions in the de novo biosynthetic pathway for UDP-N-acetylglucosamine (UDP-GlcNAc). The C-terminal domain catalyzes the transfer of acetyl group from acetyl coenzyme A to glucosamine-1-phosphate (GlcN-1-P) to produce N-acetylglucosamine-1-phosphate (GlcNAc-1-P), which is converted into UDP-GlcNAc by the transfer of uridine 5-monophosphate (from uridine 5-triphosphate), a reaction catalyzed by the N-terminal domain. The protein is Bifunctional protein GlmU of Campylobacter fetus subsp. fetus (strain 82-40).